We begin with the raw amino-acid sequence, 180 residues long: Large ribosomal subunit protein uL5 (180 aa).

It belongs to the universal ribosomal protein uL5 family. As to quaternary structure, part of the 50S ribosomal subunit; part of the 5S rRNA/L5/L18/L25 subcomplex. Contacts the 5S rRNA and the P site tRNA. Forms a bridge to the 30S subunit in the 70S ribosome.

This is one of the proteins that bind and probably mediate the attachment of the 5S RNA into the large ribosomal subunit, where it forms part of the central protuberance. In the 70S ribosome it contacts protein S13 of the 30S subunit (bridge B1b), connecting the 2 subunits; this bridge is implicated in subunit movement. Contacts the P site tRNA; the 5S rRNA and some of its associated proteins might help stabilize positioning of ribosome-bound tRNAs. The sequence is that of Large ribosomal subunit protein uL5 from Streptococcus thermophilus (strain CNRZ 1066).